The sequence spans 412 residues: MAIASSIGLVAEAIHRHKTPERPIESENDIARYPAEDEQWALDELQDELCQEEPSDSEDQPKKKIRNPAKLADDFLKRYPPPPSGSAPAGRLPLPVIIPQRRPGVRVRGFVRAYAPDLQACGIDQDTFMDFLVTMTRAGRAPQWMGAANLTAAAAFALPGHAIGCGVGFAIQVVNAIAMEMRGRVQANGFLQKLNQGFFQPRGLYCLVLSFDNTHEEAMTDESLATAIATTTDPKTGVRKYTDKLRSHSGTTGPSEFPESAPLVFPVLDWLETNANAEQAEKLGRYKKFRKFVADYYDRRAQAEYAARNPTSPLAAPPRRGFTSKLADPNDDTNKSPISLATGGLVPYNTTWRETRNSEGRRPPRKIADKVLYMIIVNMPSDDDMSRAESIMATEATTEPSVQSDDAEAAKG.

Disordered stretches follow at residues 1–66, 308–342, and 386–412; these read MAIA…KKIR, RNPT…SLAT, and SRAE…AAKG. Residues 36–58 show a composition bias toward acidic residues; that stretch reads EDEQWALDELQDELCQEEPSDSE. The span at 395–404 shows a compositional bias: polar residues; sequence EATTEPSVQS.

It participates in mycotoxin biosynthesis. In terms of biological role, part of the gene cluster that mediates the biosynthesis of burnettramic acids, an unusual class of bolaamphiphilic pyrrolizidinediones that display potent antibacterial, antifungal, and cytotoxic activities. The first step of the biosynthesis of burnettramic acids is the hydroxylation of proline by the proline hydroxylase buaE to generate 4-hydroxyproline. The PKS-NRPS buaA and trans-enoyl reductase buaC construct the highly reduced polyketide chain, and the condensation (C) domain of buaA then catalyzes the amide bond formation with the activated 4-hydroxyproline. This is followed by the R domain releasing the nascent polyketide-peptide directly via a Dieckmann condensation to afford a tetramic acid fused to the hydroxyproline, generating the bicyclic pyrrolidinedione moiety. The cytochrome P450 monooxygenases buaD and buaG are likely responsible for the multiple hydroxylations on the polyketide chain and its terminus, although in the heterologous context, buaD does not appear to be required. Therefore, while buaG may be a multifunctional cytochrome P450 monooxygenase, it cannot be ruled out that the two secondary alcohols on the polyketide chain could have an acetate origin. Finally, the glycosyltransferase buaB transfers beta-D-mannose to the aglycone burnettramic acid A to form burnettramic acid A. Burnettramic acid B is a minor cis-pyrrolizidine epimer of burnettramic acid A and it is likely that small amounts of it form naturally in acidic environments. The role of the uncharacterized protein buaF in the biosynthesis of burnettramic acids has still to be determined. The sequence is that of Burnettramic acids biosynthesis cluster protein E from Petromyces alliaceus (Aspergillus alliaceus).